Reading from the N-terminus, the 392-residue chain is Phosphoglycerate kinase (392 aa).

Residues 21–23, R36, 59–62, R114, and R147 contribute to the substrate site; these read DMN and HLGR. Residues K198, E320, and 346 to 349 each bind ATP; that span reads GGDT.

Belongs to the phosphoglycerate kinase family. In terms of assembly, monomer.

It is found in the cytoplasm. The enzyme catalyses (2R)-3-phosphoglycerate + ATP = (2R)-3-phospho-glyceroyl phosphate + ADP. Its pathway is carbohydrate degradation; glycolysis; pyruvate from D-glyceraldehyde 3-phosphate: step 2/5. The sequence is that of Phosphoglycerate kinase from Neisseria meningitidis serogroup A / serotype 4A (strain DSM 15465 / Z2491).